Here is a 330-residue protein sequence, read N- to C-terminus: Nuclear apoptosis-inducing factor 1 (330 aa).

Positions 1–74 are required for nuclear localization and apoptosis-inducing activity; sequence MASPPAPPAK…CHRELPEVKK (74 aa). 3 disordered regions span residues 92–117, 147–175, and 309–330; these read AAMEGGGESQNGGGAGTEGEDPTGAT, CGAGRRDRDPHHRLRHHRHADPGVSAAPS, and NTPSPSVTADPNQTGQQDGIIQ. Residues 95 to 108 show a composition bias toward gly residues; sequence EGGGESQNGGGAGT.

This sequence belongs to the NAIF1 family.

The protein localises to the nucleus. Functionally, induces apoptosis. The sequence is that of Nuclear apoptosis-inducing factor 1 (NAIF1) from Gallus gallus (Chicken).